A 484-amino-acid polypeptide reads, in one-letter code: Cysteine--tRNA ligase (484 aa).

Cysteine 29 contributes to the Zn(2+) binding site. A 'HIGH' region motif is present at residues 31-41 (ITVYDYCHLGH). 3 residues coordinate Zn(2+): cysteine 215, histidine 240, and glutamate 244. Residues 272–276 (KMSKS) carry the 'KMSKS' region motif. Residue lysine 275 coordinates ATP.

It belongs to the class-I aminoacyl-tRNA synthetase family. In terms of assembly, monomer. Zn(2+) is required as a cofactor.

It is found in the cytoplasm. The enzyme catalyses tRNA(Cys) + L-cysteine + ATP = L-cysteinyl-tRNA(Cys) + AMP + diphosphate. In Rippkaea orientalis (strain PCC 8801 / RF-1) (Cyanothece sp. (strain PCC 8801)), this protein is Cysteine--tRNA ligase.